The primary structure comprises 415 residues: Tyrosine--tRNA ligase (415 aa).

Positions P54–H63 match the 'HIGH' region motif. Residues K248–S252 carry the 'KMSKS' region motif. Position 251 (K251) interacts with ATP. An S4 RNA-binding domain is found at A351–T415.

The protein belongs to the class-I aminoacyl-tRNA synthetase family. TyrS type 2 subfamily. In terms of assembly, homodimer.

Its subcellular location is the cytoplasm. It catalyses the reaction tRNA(Tyr) + L-tyrosine + ATP = L-tyrosyl-tRNA(Tyr) + AMP + diphosphate + H(+). Functionally, catalyzes the attachment of tyrosine to tRNA(Tyr) in a two-step reaction: tyrosine is first activated by ATP to form Tyr-AMP and then transferred to the acceptor end of tRNA(Tyr). The chain is Tyrosine--tRNA ligase from Prochlorococcus marinus (strain NATL2A).